The chain runs to 836 residues: Ethylene receptor 3 (836 aa).

Helical transmembrane passes span 137–157 (LIAAAYFSIPLEILYFVAGLR), 166–186 (LVQFGAFIVLCGLTHLLTAFT), and 204–224 (LTALVSFLTAITLLTLIPQLL). The Cu cation site is built by Cys176 and His180. Positions 269-413 (DRHTVLYTTL…VVAGQVAVAL (145 aa)) constitute a GAF domain. Positions 416-452 (ATLLEESRAMRDRLAEQNRELLQARRDALMANEARQA) form a coiled coil. The Histidine kinase domain occupies 457–691 (MSQGMRRPIH…LVLRFQLQSP (235 aa)). The Response regulatory domain maps to 718-834 (LLIDDDDDIN…LKDELARILQ (117 aa)).

The protein belongs to the ethylene receptor family. Cu cation serves as cofactor.

It is found in the endoplasmic reticulum membrane. It carries out the reaction ATP + protein L-histidine = ADP + protein N-phospho-L-histidine.. Ethylene receptor related to bacterial two-component regulators. Acts as a negative regulator of ethylene signaling. May delay the transition from the vegetative stage to the floral stage by up-regulating GI (GIGANTEA) and RCN1 and cause starch accumulation in stems by down-regulating the alpha-amylase AMY3D. This Oryza sativa subsp. japonica (Rice) protein is Ethylene receptor 3 (ETR3).